A 275-amino-acid polypeptide reads, in one-letter code: 2-dehydro-3-deoxyphosphooctonate aldolase (275 aa).

It belongs to the KdsA family.

The protein localises to the cytoplasm. It carries out the reaction D-arabinose 5-phosphate + phosphoenolpyruvate + H2O = 3-deoxy-alpha-D-manno-2-octulosonate-8-phosphate + phosphate. The protein operates within carbohydrate biosynthesis; 3-deoxy-D-manno-octulosonate biosynthesis; 3-deoxy-D-manno-octulosonate from D-ribulose 5-phosphate: step 2/3. Its pathway is bacterial outer membrane biogenesis; lipopolysaccharide biosynthesis. The chain is 2-dehydro-3-deoxyphosphooctonate aldolase from Francisella tularensis subsp. holarctica (strain LVS).